The primary structure comprises 81 residues: Three-finger toxin A1 (81 aa).

Positions M1–T21 are cleaved as a signal peptide. 4 disulfides stabilise this stretch: C24/C43, C38/C60, C62/C73, and C74/C79.

It belongs to the three-finger toxin family. Short-chain subfamily. Type I alpha-neurotoxin sub-subfamily. Expressed by the venom gland.

The protein localises to the secreted. Binds and inhibits fetal (alpha-1-beta-1-gamma-delta/CHRNA1-CHRNB1-CHRNG-CHRND, IC(50)=1.4 nM), adult (alpha-1-beta-1-delta-epsilon/CHRNA1-CHRNB1-CHRND-CHRNE, IC(50)=12 nM) and neuronal alpha-7/CHRNA7 (IC(50)=400 nM) nicotinic acetylcholine receptors (nAChR) thereby impairing neuromuscular and neuronal transmissions. The chain is Three-finger toxin A1 from Micrurus laticollaris (Balsas coral snake).